Reading from the N-terminus, the 602-residue chain is ATP-dependent zinc metalloprotease FtsH 3 (602 aa).

Residues 1-18 (MNSWFLQVSKRLGPAGRR) are Cytoplasmic-facing. Residues 19–39 (LWLLGFMGVVLAVTLGLALRA) form a helical membrane-spanning segment. Topologically, residues 40–117 (ARESATQRTA…DFASREDPSR (78 aa)) are periplasmic. A helical membrane pass occupies residues 118–138 (AASAVLPVVVLAAVGFALFTV). Residues 139-602 (SRRRSPKVFS…RRPRPEDQAA (464 aa)) are Cytoplasmic-facing. Residue 202–209 (GEPGTGKT) participates in ATP binding. H425 is a Zn(2+) binding site. E426 is a catalytic residue. Zn(2+) contacts are provided by H429 and D501.

The protein in the central section; belongs to the AAA ATPase family. This sequence in the C-terminal section; belongs to the peptidase M41 family. Homohexamer. Requires Zn(2+) as cofactor.

The protein resides in the cell inner membrane. Its function is as follows. Acts as a processive, ATP-dependent zinc metallopeptidase for both cytoplasmic and membrane proteins. Plays a role in the quality control of integral membrane proteins. In Sorangium cellulosum (strain So ce56) (Polyangium cellulosum (strain So ce56)), this protein is ATP-dependent zinc metalloprotease FtsH 3.